The chain runs to 238 residues: Oil body-associated protein 1A (238 aa).

It belongs to the OBAP family. In terms of tissue distribution, expressed in seeds, but not in leaves or roots. Highest expression in scutellum. Detected in embryo axis and endosperm.

The protein resides in the lipid droplet. In Zea mays (Maize), this protein is Oil body-associated protein 1A.